A 371-amino-acid polypeptide reads, in one-letter code: Methionine import ATP-binding protein MetN (371 aa).

Residues 29 to 270 (IRIEGVRKVY…PRHEVTRRFV (242 aa)) form the ABC transporter domain. 67–74 (GRSGAGKS) serves as a coordination point for ATP.

This sequence belongs to the ABC transporter superfamily. Methionine importer (TC 3.A.1.24) family. As to quaternary structure, the complex is composed of two ATP-binding proteins (MetN), two transmembrane proteins (MetI) and a solute-binding protein (MetQ).

The protein resides in the cell inner membrane. It carries out the reaction L-methionine(out) + ATP + H2O = L-methionine(in) + ADP + phosphate + H(+). It catalyses the reaction D-methionine(out) + ATP + H2O = D-methionine(in) + ADP + phosphate + H(+). In terms of biological role, part of the ABC transporter complex MetNIQ involved in methionine import. Responsible for energy coupling to the transport system. This Rhodopseudomonas palustris (strain BisA53) protein is Methionine import ATP-binding protein MetN.